A 298-amino-acid chain; its full sequence is UDP-3-O-acyl-N-acetylglucosamine deacetylase (298 aa).

Zn(2+)-binding residues include H75, H232, and D236. H259 serves as the catalytic Proton donor.

This sequence belongs to the LpxC family. It depends on Zn(2+) as a cofactor.

The catalysed reaction is a UDP-3-O-[(3R)-3-hydroxyacyl]-N-acetyl-alpha-D-glucosamine + H2O = a UDP-3-O-[(3R)-3-hydroxyacyl]-alpha-D-glucosamine + acetate. It participates in glycolipid biosynthesis; lipid IV(A) biosynthesis; lipid IV(A) from (3R)-3-hydroxytetradecanoyl-[acyl-carrier-protein] and UDP-N-acetyl-alpha-D-glucosamine: step 2/6. Functionally, catalyzes the hydrolysis of UDP-3-O-myristoyl-N-acetylglucosamine to form UDP-3-O-myristoylglucosamine and acetate, the committed step in lipid A biosynthesis. The sequence is that of UDP-3-O-acyl-N-acetylglucosamine deacetylase from Nitratiruptor sp. (strain SB155-2).